The sequence spans 396 residues: Elongation factor Tu (396 aa).

In terms of domain architecture, tr-type G spans 10–206 (KPHVNIGTIG…AVDAYIPEPE (197 aa)). The interval 19–26 (GHVDHGKT) is G1. 19-26 (GHVDHGKT) contributes to the GTP binding site. Residue Thr26 coordinates Mg(2+). The tract at residues 60–64 (GITIA) is G2. A G3 region spans residues 81-84 (DCPG). Residues 81–85 (DCPGH) and 136–139 (NKAD) each bind GTP. The G4 stretch occupies residues 136 to 139 (NKAD). The G5 stretch occupies residues 174–176 (SAL).

Belongs to the TRAFAC class translation factor GTPase superfamily. Classic translation factor GTPase family. EF-Tu/EF-1A subfamily. As to quaternary structure, monomer.

It localises to the cytoplasm. The catalysed reaction is GTP + H2O = GDP + phosphate + H(+). In terms of biological role, GTP hydrolase that promotes the GTP-dependent binding of aminoacyl-tRNA to the A-site of ribosomes during protein biosynthesis. The polypeptide is Elongation factor Tu (Geobacter metallireducens (strain ATCC 53774 / DSM 7210 / GS-15)).